The chain runs to 614 residues: Kelch-like protein 40 (614 aa).

Residues 33 to 100 enclose the BTB domain; that stretch reads IDCVLKIQGK…IYTSEIEITE (68 aa). A BACK domain is found at 135–237; sequence CLAIFRLGLL…PQDYIKNKVE (103 aa). Kelch repeat units follow at residues 353–405, 406–455, 456–503, 505–550, and 552–606; these read QLFV…ESDN, SIYL…SHDN, LVYV…VHKG, ILIA…SMNG, and LYAI…AARL.

Belongs to the KLHL40 family. Component of the BCR(KLHL40) E3 ubiquitin ligase complex.

The protein localises to the cytoplasm. It localises to the myofibril. It is found in the sarcomere. The protein resides in the a band. Its subcellular location is the i band. Functionally, substrate-specific adapter of a BCR (BTB-CUL3-RBX1) E3 ubiquitin ligase complex that acts as a key regulator of skeletal muscle development. The protein is Kelch-like protein 40 (klhl40) of Xenopus tropicalis (Western clawed frog).